Reading from the N-terminus, the 572-residue chain is Cytochrome P450 monooxygenase xilC (572 aa).

Cys-515 is a binding site for heme.

The protein belongs to the cytochrome P450 family. Requires heme as cofactor.

Its pathway is secondary metabolite biosynthesis. Functionally, cytochrome P450 monooxygenase; part of the gene cluster that mediates the biosynthesis of the 6-methyl-2-pyrone derivative xylariolide D. XilC hydroxylates the 5-alkyl-6-methyl-2-pyrone backbone called prexylariolide D, produced by the highly reducing polyketide synthase xilA, on its side chain to form xylariolide D. In Penicillium rubens (strain ATCC 28089 / DSM 1075 / NRRL 1951 / Wisconsin 54-1255) (Penicillium chrysogenum), this protein is Cytochrome P450 monooxygenase xilC.